A 423-amino-acid polypeptide reads, in one-letter code: MTRLDSVERAVADIAAGKAVVVIDDEDRENEGDLIFAAEKATPELVAFMVRYTSGYLCVPLAGEICDRLGLLPMYAVNQDKHGTAYTVTVDAKVGVGTGISASDRATTMRLLADPDSVADDFTKPGHVVPLRAKDGGVLRRPGHTEAAVDLARLAGLQAAGTICEIVSQKDEGAMAQTDELRIFADEHDLALISIADLIEWRRKHEKHIARVAEARIPTRHGEFRAVGYTSIYEDVEHVALVKGDIAGPHGDGHDVLVRVHSECLTGDVFGSRRCDCGPQLDAALAMVAREGRGIVLYMRGHEGRGIGLMHKLQAYQLQDAGDDTVDANLKLGLPADARDYGTGAQILVDLGVRSMRLLTNNPAKRVGLDGYGLHIIERVPLPVRANAENIRYLMTKRDRMGHDLVGLDDFDEAVPGEFGGAV.

Residues 1–204 (MTRLDSVERA…IADLIEWRRK (204 aa)) are DHBP synthase. D-ribulose 5-phosphate contacts are provided by residues 28-29 (RE), D33, 141-145 (RPGHT), and E165. Residue E29 participates in Mg(2+) binding. H144 provides a ligand contact to Mg(2+). The tract at residues 205-423 (HEKHIARVAE…AVPGEFGGAV (219 aa)) is GTP cyclohydrolase II. Residue 259 to 263 (RVHSE) coordinates GTP. Positions 264, 275, and 277 each coordinate Zn(2+). GTP-binding positions include Q280, 303-305 (EGR), and T325. The active-site Proton acceptor; for GTP cyclohydrolase activity is the D337. The active-site Nucleophile; for GTP cyclohydrolase activity is the R339. Residues T360 and K365 each coordinate GTP.

The protein in the N-terminal section; belongs to the DHBP synthase family. In the C-terminal section; belongs to the GTP cyclohydrolase II family. It depends on Mg(2+) as a cofactor. The cofactor is Mn(2+). Zn(2+) serves as cofactor.

The catalysed reaction is D-ribulose 5-phosphate = (2S)-2-hydroxy-3-oxobutyl phosphate + formate + H(+). It carries out the reaction GTP + 4 H2O = 2,5-diamino-6-hydroxy-4-(5-phosphoribosylamino)-pyrimidine + formate + 2 phosphate + 3 H(+). It functions in the pathway cofactor biosynthesis; riboflavin biosynthesis; 2-hydroxy-3-oxobutyl phosphate from D-ribulose 5-phosphate: step 1/1. It participates in cofactor biosynthesis; riboflavin biosynthesis; 5-amino-6-(D-ribitylamino)uracil from GTP: step 1/4. Functionally, catalyzes the conversion of D-ribulose 5-phosphate to formate and 3,4-dihydroxy-2-butanone 4-phosphate. Its function is as follows. Catalyzes the conversion of GTP to 2,5-diamino-6-ribosylamino-4(3H)-pyrimidinone 5'-phosphate (DARP), formate and pyrophosphate. This chain is Riboflavin biosynthesis protein RibBA, found in Mycolicibacterium gilvum (strain PYR-GCK) (Mycobacterium gilvum (strain PYR-GCK)).